Here is a 614-residue protein sequence, read N- to C-terminus: Phragmoplastin DRP1C (614 aa).

The 270-residue stretch at 32–301 (WEALPTVAVV…LETVIRQKIP (270 aa)) folds into the Dynamin-type G domain. The interval 42-49 (GGQSSGKS) is G1 motif. 45–50 (SSGKSS) contacts GTP. The tract at residues 68-70 (VTR) is G2 motif. The interval 143 to 146 (DLPG) is G3 motif. The segment at 212 to 215 (TKLD) is G4 motif. Residues 213–218 (KLDIMD) and 243–246 (NRSQ) each bind GTP. The G5 motif stretch occupies residues 242-245 (VNRS). Residues 499–519 (EPEKEKPNPRNAPAPNADPYS) are disordered. The segment covering 507 to 517 (PRNAPAPNADP) has biased composition (low complexity). Positions 523–614 (FRKIGSNVSA…RDDIDAVAWK (92 aa)) constitute a GED domain.

The protein belongs to the TRAFAC class dynamin-like GTPase superfamily. Dynamin/Fzo/YdjA family. Forms homodimer and may homooligomerize and heterooligomerize to form the phragmoplastin complex. Binds to PHIP1. In terms of tissue distribution, ubiquitous.

Its subcellular location is the cytoplasm. It is found in the cytoskeleton. It localises to the cell cortex. The protein resides in the cytoplasmic vesicle. The protein localises to the clathrin-coated vesicle. Its subcellular location is the phragmoplast. It carries out the reaction GTP + H2O = GDP + phosphate + H(+). Its function is as follows. Microtubule-associated force-producing protein that is targeted to the growing edges of the cell plate during cytokinesis. Also plays a major role in plasma membrane maintenance during pollen maturation. Has a GTPase activity. This is Phragmoplastin DRP1C from Arabidopsis thaliana (Mouse-ear cress).